Consider the following 306-residue polypeptide: Probable pinoresinol-lariciresinol reductase 3 (306 aa).

NADP(+)-binding positions include glycine 14 to glycine 20, arginine 39, and lysine 46. Catalysis depends on lysine 131, which acts as the Proton acceptor. Arginine 135 contacts NADP(+).

Belongs to the NmrA-type oxidoreductase family. Isoflavone reductase subfamily. As to quaternary structure, dimer.

In terms of biological role, probable reductase that might be involved in the reduction of lariciresinol into secoisolariciresinol. In most plant species, a single enzyme is able to reduce both pinoresinol and lariciresinol efficiently while in Arabidopsis, PRR1 and PRR2 show a strict substrate selectivity for pinoresinol. The sequence is that of Probable pinoresinol-lariciresinol reductase 3 (PLR3) from Arabidopsis thaliana (Mouse-ear cress).